The primary structure comprises 430 residues: Mothers against decapentaplegic homolog 9 (430 aa).

In terms of domain architecture, MH1 spans 16–140 (PAVKRLLGWK…YRRVETPVLP (125 aa)). 4 residues coordinate Zn(2+): Cys-68, Cys-113, Cys-125, and His-130. The segment at 186–222 (CPAPPSSPGHVFPQSPCPTSYPHSPGSPSESDSPYQH) is disordered. The segment covering 202 to 221 (CPTSYPHSPGSPSESDSPYQ) has biased composition (polar residues). An MH2 domain is found at 236–430 (WCSVAYYELN…SPHNPISSVS (195 aa)).

The protein belongs to the dwarfin/SMAD family. As to quaternary structure, interaction with the co-SMAD SMAD4. Interacts with PEBP2-alpha subunit. Interacts with RANBP3L. Post-translationally, phosphorylated on serine by BMP (bone morphogenetic proteins) type 1 receptor kinase and activin type I receptor-like kinases (ALK-2, ALK-3 and ALK-6).

It is found in the cytoplasm. The protein resides in the nucleus. Functionally, transcriptional modulator activated by BMP (bone morphogenetic proteins) type 1 receptor kinase. SMAD9 is a receptor-regulated SMAD (R-SMAD). Has been shown to be activated by activin type I receptor-like kinases (ALK-2, ALK-3, ALK-6) which stimulate heteromerization between SMAD9 and SMAD4. May play a role in osteoblast differentiation and maturation. This Mus musculus (Mouse) protein is Mothers against decapentaplegic homolog 9 (Smad9).